A 561-amino-acid polypeptide reads, in one-letter code: Transmembrane protein 209 (561 aa).

Phosphoserine is present on residues Ser9 and Ser11. The chain crosses the membrane as a helical span at residues 28–48 (VVLAWGLLNVSMAGMIYTEMT). N-linked (GlcNAc...) asparagine glycosylation occurs at Asn57. The helical transmembrane segment at 60–80 (YWPLWYIELALASLFSLNALF) threads the bilayer. Position 98 is a phosphoserine (Ser98). Disordered regions lie at residues 120 to 156 (LAATQISPSPPSPSIQGQSVLSYSPSRSPSTSPKFAT) and 196 to 233 (SLSPSSPYPTTVGPVESSGLRARYRSPPTAYNSPTDKE). Low complexity predominate over residues 138–152 (SVLSYSPSRSPSTSP). A phosphoserine mark is found at Ser201 and Ser248. The interval 250 to 270 (EEKQHRVKLGSPDSTSPSTSP) is disordered. Low complexity predominate over residues 260–270 (SPDSTSPSTSP). Asn274 carries N-linked (GlcNAc...) asparagine glycosylation. Ser278 carries the phosphoserine modification.

Interacts with NUP205.

The protein resides in the membrane. It is found in the nucleus envelope. The protein localises to the golgi apparatus. It localises to the cytoplasm. Nuclear envelope protein which in association with NUP205, may be involved in nuclear transport of various nuclear proteins in addition to MYC. This is Transmembrane protein 209 (Tmem209) from Rattus norvegicus (Rat).